We begin with the raw amino-acid sequence, 195 residues long: MTWPYATPGIPDELFERAEGVPMTKAEVRSVALSKLRLRRGGVLVDVGCGTGSVSVEAALIMGEGSRVYAVDYDEEALMLTKRNAEKFGVADRVVLVRGKAPEVLAELPKADRYFVGGGGLELPAIIKAAVERMEKGIIVADVVTLESLKAAVEALGELGLDYEVTQIFVARGQRKGRYTVMTALNPVYIITAYA.

S-adenosyl-L-methionine contacts are provided by residues Thr24, Gly48–Gly52, Asp72, and Ala101.

It belongs to the methyltransferase superfamily. Archaeal-type CbiT family.

It carries out the reaction Co-precorrin-6B + S-adenosyl-L-methionine = Co-precorrin-7 + S-adenosyl-L-homocysteine + CO2. The protein operates within cofactor biosynthesis; adenosylcobalamin biosynthesis; cob(II)yrinate a,c-diamide from sirohydrochlorin (anaerobic route): step 8/10. Functionally, catalyzes the methylation of C-15 in cobalt-precorrin-6B followed by the decarboxylation of C-12 to form cobalt-precorrin-7. This Pyrobaculum calidifontis (strain DSM 21063 / JCM 11548 / VA1) protein is Probable cobalt-precorrin-6B C(15)-methyltransferase (decarboxylating).